We begin with the raw amino-acid sequence, 80 residues long: Mu-conotoxin BuIIIC (80 aa).

A signal peptide spans 1-22 (MMSKLGVLLTICLLLFPLFALP). The propeptide occupies 23–51 (QDGDQPADRPAERMQDDLSSEQHPLFEKR). Cystine bridges form between cysteine 56-cysteine 70, cysteine 57-cysteine 76, and cysteine 66-cysteine 77. Cysteine 77 is subject to Cysteine amide.

Belongs to the conotoxin M superfamily. In terms of tissue distribution, expressed by the venom duct.

The protein resides in the secreted. In terms of biological role, mu-conotoxins block voltage-gated sodium channels. Extremely potent inhibitor of Nav1.4/SCN4A (96% inhibition at 1 uM). The inhibition is very slowly reversible. This chain is Mu-conotoxin BuIIIC, found in Conus bullatus (Bubble cone).